Reading from the N-terminus, the 416-residue chain is MKGILLLFLKLVVLFVYLCSSVLSECPALYRRYSKEHTFCKTKNQKCNIKRWGVSQDDRNTIINLHNKVRNNIALGQDQSGRLPAAGDMLEMEWDDELAQIAQKLADQCVFKHDCDDCRKVENFDVGQNIFTTTITAVEIPDPFWVDAIRSWYNEIYRFTRDFIKPFTSDHATGHFTQMVWSKTWRVGCGYVLYEKRKDSWTQLYVCNYGPAGNLDDSELYKVDKPCEKCPSNTCCGSHCKKKKSTSYLGLCDVLNGSGPDFDETDFSNYIFNCDFKPESSSDCNNKVEGSNKWQTRQIISDVYKTVVLNGGENTVLKFTSNIQSKDGFCLTVSFRKGPNIAGTNNVGEFDVQLERKGAKPLNFRLDSDGNQFLPYSMGIPMNHPMQINIKFSVPKGAPAQYLDISYIRARPGLCN.

Positions 1 to 24 (MKGILLLFLKLVVLFVYLCSSVLS) are cleaved as a signal peptide. In terms of domain architecture, SCP spans 57–217 (DDRNTIINLH…NYGPAGNLDD (161 aa)). The residue at position 82 (R82) is an Arginine amide; in Cryptide Pep-4.

This sequence belongs to the CRISP family. Venom allergen 5-like subfamily. Contains 9 disulfide bonds. As to expression, expressed by the venom gland.

It localises to the secreted. Functionally, presents weak lactate dehydrogenase (LDH) release from mast cells. Does not induce hemolytic activity, mast cell degranulation, and antimicrobial effects. In vivo, injection into mice causes moderate edema formation, but induces very weak or no change in nociceptive sensibility. It also causes an alteration in rearing (standing on hind limbs), but does not impact locomotion. In Tityus serrulatus (Brazilian scorpion), this protein is Venom allergen 5.